A 217-amino-acid chain; its full sequence is Nitrile hydratase subunit beta (217 aa).

Belongs to the nitrile hydratase subunit beta family. As to quaternary structure, heterodimer of an alpha and a beta chain.

The catalysed reaction is an aliphatic primary amide = an aliphatic nitrile + H2O. NHase catalyzes the hydration of various nitrile compounds to the corresponding amides. The chain is Nitrile hydratase subunit beta (nthB) from Pseudomonas putida (Arthrobacter siderocapsulatus).